A 270-amino-acid polypeptide reads, in one-letter code: Hairy and enhancer of split-related protein helt (270 aa).

Positions 1 to 24 (MNARALYKRPPPVSSSQSEASGKR) are disordered. The bHLH domain maps to 59–114 (KTPVSHKVIEKRRRDRINRCLNELGKTVPMALAKQNSGKLEKAEILEMTVQYLRAL). One can recognise an Orange domain in the interval 136–171 (FHYGYHECMKNLVHYLTTVERMETKDTKYARILAFL).

This sequence belongs to the HEY family.

Its subcellular location is the nucleus. Transcriptional repressor which binds preferentially to the canonical E box sequence 5'-CACGCG-3'. The polypeptide is Hairy and enhancer of split-related protein helt (helt) (Danio rerio (Zebrafish)).